We begin with the raw amino-acid sequence, 369 residues long: Chorismate synthase (369 aa).

Residues Arg-48 and Arg-54 each coordinate NADP(+). Residues 125 to 127, 238 to 239, Gly-278, 293 to 297, and Arg-319 each bind FMN; these read RSS, NA, and KPTSS.

Belongs to the chorismate synthase family. In terms of assembly, homotetramer. Requires FMNH2 as cofactor.

It carries out the reaction 5-O-(1-carboxyvinyl)-3-phosphoshikimate = chorismate + phosphate. The protein operates within metabolic intermediate biosynthesis; chorismate biosynthesis; chorismate from D-erythrose 4-phosphate and phosphoenolpyruvate: step 7/7. Its function is as follows. Catalyzes the anti-1,4-elimination of the C-3 phosphate and the C-6 proR hydrogen from 5-enolpyruvylshikimate-3-phosphate (EPSP) to yield chorismate, which is the branch point compound that serves as the starting substrate for the three terminal pathways of aromatic amino acid biosynthesis. This reaction introduces a second double bond into the aromatic ring system. This Burkholderia thailandensis (strain ATCC 700388 / DSM 13276 / CCUG 48851 / CIP 106301 / E264) protein is Chorismate synthase.